Consider the following 479-residue polypeptide: Transmembrane protein 161A (479 aa).

An N-terminal signal peptide occupies residues 1–28; it reads MAVLGVQLVVTLLTATLMHRLAPHCSFA. Topologically, residues 29 to 98 are extracellular; the sequence is RWLLCNGSLF…LTTVDALVLR (70 aa). The N-linked (GlcNAc...) asparagine glycan is linked to asparagine 34. A Phosphoserine modification is found at serine 69. Residues 99-119 traverse the membrane as a helical segment; the sequence is FFLEYQWFVDFAVYSGGVYLF. The Cytoplasmic portion of the chain corresponds to 120–134; that stretch reads TEAYYYMLGPAKETN. The chain crosses the membrane as a helical span at residues 135 to 155; it reads IAVFWCLLTVTFSIKMFLTVT. Topologically, residues 156–166 are extracellular; that stretch reads RLYFSAEEGGE. The chain crosses the membrane as a helical span at residues 167–187; sequence RSVCLTFAFLFLLLAMLVQVV. Residues 188 to 224 are Cytoplasmic-facing; sequence REETLELGLEPGLASMTQNLEPLLKKQGWDWALPVAK. Residues 225–245 form a helical membrane-spanning segment; that stretch reads LAIRVGLAVVGSVLGAFLTFP. At 246 to 263 the chain is on the extracellular side; sequence GLRLAQTHRDALTMSEDR. The helical transmembrane segment at 264–284 threads the bilayer; sequence PMLQFLLHTSFLSPLFILWLW. At 285 to 304 the chain is on the cytoplasmic side; sequence TKPIARDFLHQPPFGETRFS. The chain crosses the membrane as a helical span at residues 305–325; it reads LLSDSAFDSGRLWLLVVLCLL. Topologically, residues 326–370 are extracellular; that stretch reads RLAVTRPHLQAYLCLAKARVEQLRREAGRIEAREIQQRVVRVYCY. The helical transmembrane segment at 371–391 threads the bilayer; it reads VTVVSLQYLTPLILTLNCTLL. Residues 392–449 are Cytoplasmic-facing; it reads LKTLGGYSWGLGPAPLLSPDPSSASAAPIGSGEDEVQQTAARIAGALGGLLTPLFLRG. The helical transmembrane segment at 450–470 threads the bilayer; the sequence is VLAYLIWWTAACQLLASLFGL. The Extracellular portion of the chain corresponds to 471-479; that stretch reads YFHQHLAGS.

It belongs to the TMEM161 family.

The protein localises to the membrane. Its function is as follows. May play a role in protection against oxidative stress. Overexpression leads to reduced levels of oxidant-induced DNA damage and apoptosis. This is Transmembrane protein 161A (TMEM161A) from Homo sapiens (Human).